The primary structure comprises 1993 residues: [F-actin]-monooxygenase MICAL3 (1993 aa).

Residues 2–494 are monooxygenase domain; the sequence is EERKQETTNQ…RHLYDSGETK (493 aa). FAD-binding positions include Cys-97, 116 to 118, 123 to 125, Phe-183, Tyr-298, and Asp-398; these read EKR and RNN. The region spanning 518–624 is the Calponin-homology (CH) domain; that stretch reads VARSSKLLGW…YLTQFYEMFK (107 aa). Ser-649 bears the Phosphoserine mark. Residues 658–704 form a disordered region; the sequence is GQTISRKRSPKDKKEKDSDGAGKRRKTSQSEEEEPPRSYKGERPTLV. Residues 669 to 679 show a composition bias toward basic and acidic residues; it reads DKKEKDSDGAG. Residues Ser-685 and Ser-687 each carry the phosphoserine modification. Positions 762-824 constitute an LIM zinc-binding domain; the sequence is DTCYFCQKRV…KPHYCYRLSG (63 aa). Zn(2+)-binding residues include Cys-764, Cys-767, His-785, Cys-788, Cys-791, Cys-794, Cys-814, and His-817. The segment at 854–886 is disordered; the sequence is NGLASVAASSAERSPGTSMNGLEEPSIAKRLRG. Residues 860–873 show a composition bias toward polar residues; sequence AASSAERSPGTSMN. The residue at position 887 (Thr-887) is a Phosphothreonine. Disordered stretches follow at residues 905-1023, 1039-1309, 1332-1546, and 1559-1837; these read ELEE…RLQQ, WTHI…LSGP, IRRS…FFTP, and KENG…EELK. Residues 938–951 show a composition bias toward acidic residues; that stretch reads SEMEEEEEEDDEDD. Residues 975–988 show a composition bias toward basic and acidic residues; that stretch reads GRSEEELEASKNFE. Ser-977 bears the Phosphoserine mark. A compositionally biased stretch (acidic residues) spans 989–1014; it reads PEEEEEEEEYEEEDEEYEEEEEEESS. Residues 1039-1051 show a composition bias toward basic and acidic residues; sequence WTHIREREAEERM. The span at 1065–1090 shows a compositional bias: acidic residues; sequence DEDDLEEDADSEPAETEGEAAEDGDP. Residues 1111–1148 are compositionally biased toward basic and acidic residues; that stretch reads EAEHRLQSQAKVKAELELRVSENEEEKPSDAPKQEERG. Phosphoserine is present on residues Ser-1131 and Ser-1187. A compositionally biased stretch (basic and acidic residues) spans 1199–1212; it reads LREKPKAEVPEEQK. Polar residues predominate over residues 1230–1239; it reads SPTSPTSLQP. The span at 1245–1255 shows a compositional bias: pro residues; the sequence is PPTPPTPPPTQ. Polar residues predominate over residues 1257 to 1275; it reads PICSQPQPSSDASIPSPTK. Position 1272 is a phosphoserine (Ser-1272). Thr-1274 is modified (phosphothreonine). Ser-1276 and Ser-1335 each carry phosphoserine. Thr-1339 is subject to Phosphothreonine. A phosphoserine mark is found at Ser-1369 and Ser-1382. The segment covering 1405–1420 has biased composition (basic and acidic residues); the sequence is PSDKELRSSQEERRDL. The segment covering 1421–1433 has biased composition (low complexity); the sequence is SSSSGLGLHDSSS. Ser-1431 is modified (phosphoserine). Residues 1434-1452 are compositionally biased toward polar residues; that stretch reads NMKTLGSQSFNTSDSTMLT. Position 1452 is a phosphothreonine (Thr-1452). Over residues 1454-1465 the composition is skewed to pro residues; the sequence is PSSPPPPPPPNE. The span at 1516 to 1530 shows a compositional bias: acidic residues; sequence SVDEIPFADDVEDTY. Basic and acidic residues predominate over residues 1584–1600; the sequence is EAKELAEERMRAREKSV. Over residues 1623–1633 the composition is skewed to polar residues; sequence SSRSHTAQSQG. At Ser-1640 the chain carries Phosphoserine. Low complexity predominate over residues 1665 to 1685; the sequence is SPPSDSGGPDGSVTSSEGSSG. Over residues 1686 to 1704 the composition is skewed to basic residues; the sequence is KSKKRSSLFSPRRNKKEKK. A phosphoserine mark is found at Ser-1692 and Ser-1695. Over residues 1754–1763 the composition is skewed to polar residues; that stretch reads TPSSGATVDS. Residues 1795 to 1811 are compositionally biased toward basic and acidic residues; the sequence is ILERSSQKSKREPRTYT. Residues 1817–1983 adopt a coiled-coil conformation; the sequence is AKLTRRVQKA…EEDKDLEAAM (167 aa). Positions 1819–1830 are enriched in basic residues; sequence LTRRVQKAARRQ. Positions 1832–1981 constitute a bMERB domain; the sequence is KQEELKRLHR…EKEEDKDLEA (150 aa). Ser-1903 is subject to Phosphoserine.

This sequence belongs to the Mical family. In terms of assembly, interacts with RAB1B, RAB8A, RAB10, RAB13 and RAB15 (in their GTP-bound forms); binding to RAB1B is of low affinity compared to other Rab proteins; at least in case of RAB8A can bind 2 molecules of RAB8A simultaneously through a high and a low affinity binding site, respectively. Interacts with ERC1 and RAB8A; may bridge ERC1 with RAB8A. Interacts with KIF23 and ERC1; enhances the interaction between KIF23 and ERC1. Interacts with NINL. Requires FAD as cofactor.

It localises to the cytoplasm. The protein localises to the cell cortex. It is found in the cytoskeleton. The protein resides in the nucleus. Its subcellular location is the midbody. It localises to the spindle. The protein localises to the cilium basal body. It catalyses the reaction L-methionyl-[F-actin] + NADPH + O2 + H(+) = L-methionyl-(R)-S-oxide-[F-actin] + NADP(+) + H2O. In terms of biological role, monooxygenase that promotes depolymerization of F-actin by mediating oxidation of specific methionine residues on actin to form methionine-sulfoxide, resulting in actin filament disassembly and preventing repolymerization. In the absence of actin, it also functions as a NADPH oxidase producing H(2)O(2). Seems to act as Rab effector protein and play a role in vesicle trafficking. Involved in exocytic vesicles tethering and fusion: the monooxygenase activity is required for this process and implicates RAB8A associated with exocytotic vesicles. Required for cytokinesis. Contributes to stabilization and/or maturation of the intercellular bridge independently of its monooxygenase activity. Promotes recruitment of Rab8 and ERC1 to the intercellular bridge, and together these proteins are proposed to function in timely abscission. This is [F-actin]-monooxygenase MICAL3 (Mical3) from Mus musculus (Mouse).